The following is a 65-amino-acid chain: Large ribosomal subunit protein bL31 (65 aa).

Residues Cys-16, Cys-18, Cys-36, and Cys-39 each coordinate Zn(2+).

The protein belongs to the bacterial ribosomal protein bL31 family. Type A subfamily. Part of the 50S ribosomal subunit. Zn(2+) is required as a cofactor.

Functionally, binds the 23S rRNA. The protein is Large ribosomal subunit protein bL31 of Desulfitobacterium hafniense (strain DSM 10664 / DCB-2).